The sequence spans 239 residues: ATP synthase subunit a (239 aa).

The next 6 helical transmembrane spans lie at 31 to 51, 91 to 111, 125 to 145, 151 to 171, 194 to 214, and 215 to 235; these read FLLQ…LGLG, VFPL…LGMI, AACA…FHGV, FMGP…IGHI, ILFF…LGLF, and TGFI…AGAI.

This sequence belongs to the ATPase A chain family. As to quaternary structure, F-type ATPases have 2 components, CF(1) - the catalytic core - and CF(0) - the membrane proton channel. CF(1) has five subunits: alpha(3), beta(3), gamma(1), delta(1), epsilon(1). CF(0) has three main subunits: a(1), b(2) and c(9-12). The alpha and beta chains form an alternating ring which encloses part of the gamma chain. CF(1) is attached to CF(0) by a central stalk formed by the gamma and epsilon chains, while a peripheral stalk is formed by the delta and b chains.

It localises to the cell inner membrane. In terms of biological role, key component of the proton channel; it plays a direct role in the translocation of protons across the membrane. This Syntrophobacter fumaroxidans (strain DSM 10017 / MPOB) protein is ATP synthase subunit a.